We begin with the raw amino-acid sequence, 199 residues long: Ribonuclease HII (199 aa).

The region spanning 11–199 (SRVAGVDEVG…RRSFLRRLLG (189 aa)) is the RNase H type-2 domain. 3 residues coordinate a divalent metal cation: aspartate 17, glutamate 18, and aspartate 113.

It belongs to the RNase HII family. Mn(2+) serves as cofactor. It depends on Mg(2+) as a cofactor.

Its subcellular location is the cytoplasm. The catalysed reaction is Endonucleolytic cleavage to 5'-phosphomonoester.. Endonuclease that specifically degrades the RNA of RNA-DNA hybrids. In Synechococcus sp. (strain CC9902), this protein is Ribonuclease HII.